A 138-amino-acid polypeptide reads, in one-letter code: Nucleoside diphosphate kinase (138 aa).

Residues K9, F57, R85, T91, R102, and N112 each coordinate ATP. H115 functions as the Pros-phosphohistidine intermediate in the catalytic mechanism.

It belongs to the NDK family. As to quaternary structure, homotetramer. Mg(2+) is required as a cofactor.

Its subcellular location is the cytoplasm. The catalysed reaction is a 2'-deoxyribonucleoside 5'-diphosphate + ATP = a 2'-deoxyribonucleoside 5'-triphosphate + ADP. The enzyme catalyses a ribonucleoside 5'-diphosphate + ATP = a ribonucleoside 5'-triphosphate + ADP. Its function is as follows. Major role in the synthesis of nucleoside triphosphates other than ATP. The ATP gamma phosphate is transferred to the NDP beta phosphate via a ping-pong mechanism, using a phosphorylated active-site intermediate. In Lawsonia intracellularis (strain PHE/MN1-00), this protein is Nucleoside diphosphate kinase.